Reading from the N-terminus, the 180-residue chain is Large ribosomal subunit protein uL5c (180 aa).

This sequence belongs to the universal ribosomal protein uL5 family. Part of the 50S ribosomal subunit; contacts the 5S rRNA.

It localises to the plastid. It is found in the chloroplast. In terms of biological role, binds 5S rRNA, forms part of the central protuberance of the 50S subunit. The protein is Large ribosomal subunit protein uL5c (rpl5) of Oedogonium cardiacum (Filamentous green alga).